A 156-amino-acid polypeptide reads, in one-letter code: Putative HTH-type transcriptional regulator YwgB (156 aa).

The HTH rrf2-type domain occupies 2-133 (KMKSGMEQAV…REESLQHVMD (132 aa)).

In Bacillus subtilis (strain 168), this protein is Putative HTH-type transcriptional regulator YwgB (ywgB).